A 165-amino-acid chain; its full sequence is Transcription antitermination protein NusB (165 aa).

The disordered stretch occupies residues 139-165; that stretch reads EAVRSHRRNKRPAADKPVATDKPAAAE.

This sequence belongs to the NusB family.

Functionally, involved in transcription antitermination. Required for transcription of ribosomal RNA (rRNA) genes. Binds specifically to the boxA antiterminator sequence of the ribosomal RNA (rrn) operons. This is Transcription antitermination protein NusB from Laribacter hongkongensis (strain HLHK9).